The chain runs to 133 residues: Nickel-responsive regulator (133 aa).

Ni(2+) contacts are provided by His76, His87, His89, and Cys95.

This sequence belongs to the transcriptional regulatory CopG/NikR family. Homotetramer. It depends on Ni(2+) as a cofactor.

Functionally, transcriptional repressor of the nikABCDE operon. Is active in the presence of excessive concentrations of intracellular nickel. This is Nickel-responsive regulator from Escherichia coli (strain SE11).